The following is a 178-amino-acid chain: Cytochrome b6-f complex iron-sulfur subunit (178 aa).

A helical transmembrane segment spans residues 20 to 42 (LLTFGSVTGVALGALYPVVNYFI). The region spanning 65-161 (ATGWLSSHPE…VSVENDNVFV (97 aa)) is the Rieske domain. Cys-107, His-109, Cys-125, and His-128 together coordinate [2Fe-2S] cluster. Cysteines 112 and 127 form a disulfide.

This sequence belongs to the Rieske iron-sulfur protein family. As to quaternary structure, the 4 large subunits of the cytochrome b6-f complex are cytochrome b6, subunit IV (17 kDa polypeptide, PetD), cytochrome f and the Rieske protein, while the 4 small subunits are PetG, PetL, PetM and PetN. The complex functions as a dimer. [2Fe-2S] cluster is required as a cofactor.

Its subcellular location is the cellular thylakoid membrane. The enzyme catalyses 2 oxidized [plastocyanin] + a plastoquinol + 2 H(+)(in) = 2 reduced [plastocyanin] + a plastoquinone + 4 H(+)(out). Component of the cytochrome b6-f complex, which mediates electron transfer between photosystem II (PSII) and photosystem I (PSI), cyclic electron flow around PSI, and state transitions. The polypeptide is Cytochrome b6-f complex iron-sulfur subunit (Parasynechococcus marenigrum (strain WH8102)).